We begin with the raw amino-acid sequence, 177 residues long: Large ribosomal subunit protein uL6 (177 aa).

The protein belongs to the universal ribosomal protein uL6 family. As to quaternary structure, part of the 50S ribosomal subunit.

Its function is as follows. This protein binds to the 23S rRNA, and is important in its secondary structure. It is located near the subunit interface in the base of the L7/L12 stalk, and near the tRNA binding site of the peptidyltransferase center. The chain is Large ribosomal subunit protein uL6 from Halorhodospira halophila (strain DSM 244 / SL1) (Ectothiorhodospira halophila (strain DSM 244 / SL1)).